The sequence spans 164 residues: Large ribosomal subunit protein uL11 (164 aa).

The protein belongs to the universal ribosomal protein uL11 family. Part of the ribosomal stalk of the 50S ribosomal subunit. Interacts with L10 and the large rRNA to form the base of the stalk. L10 forms an elongated spine to which L12 dimers bind in a sequential fashion forming a multimeric L10(L12)X complex.

Its function is as follows. Forms part of the ribosomal stalk which helps the ribosome interact with GTP-bound translation factors. This is Large ribosomal subunit protein uL11 from Pyrococcus horikoshii (strain ATCC 700860 / DSM 12428 / JCM 9974 / NBRC 100139 / OT-3).